The primary structure comprises 308 residues: ADP-L-glycero-D-manno-heptose-6-epimerase (308 aa).

Residues 10-11, 31-32, Lys-38, Lys-53, 75-79, and Asn-92 each bind NADP(+); these read MI, DN, and EGACS. Catalysis depends on Tyr-139, which acts as the Proton acceptor. NADP(+) is bound at residue Lys-143. Asn-168 lines the substrate pocket. Residues Val-169 and Lys-177 each coordinate NADP(+). The active-site Proton acceptor is Lys-177. Residues Ser-179, His-186, 200–203, Arg-208, and Tyr-271 contribute to the substrate site; that span reads FAGS.

Belongs to the NAD(P)-dependent epimerase/dehydratase family. HldD subfamily. In terms of assembly, homopentamer. The cofactor is NADP(+).

The enzyme catalyses ADP-D-glycero-beta-D-manno-heptose = ADP-L-glycero-beta-D-manno-heptose. The protein operates within nucleotide-sugar biosynthesis; ADP-L-glycero-beta-D-manno-heptose biosynthesis; ADP-L-glycero-beta-D-manno-heptose from D-glycero-beta-D-manno-heptose 7-phosphate: step 4/4. Catalyzes the interconversion between ADP-D-glycero-beta-D-manno-heptose and ADP-L-glycero-beta-D-manno-heptose via an epimerization at carbon 6 of the heptose. In Mannheimia succiniciproducens (strain KCTC 0769BP / MBEL55E), this protein is ADP-L-glycero-D-manno-heptose-6-epimerase.